Consider the following 56-residue polypeptide: Hydrophobic protein LTI6A (56 aa).

Transmembrane regions (helical) follow at residues 11-31 (IILAIILPPLGVFFKFGCGIE) and 34-54 (ICLLLTFFGYLPGIIYAVWVI).

Belongs to the UPF0057 (PMP3) family. In terms of tissue distribution, expressed in shoot of cold stressed seedlings.

It is found in the membrane. In terms of biological role, plays a role in the regulation of membrane potential. Could mediate a proton leak. This is Hydrophobic protein LTI6A (LTI6A) from Oryza sativa subsp. japonica (Rice).